A 418-amino-acid polypeptide reads, in one-letter code: Putative F-box protein At3g23950 (418 aa).

The F-box domain maps to 1-42; it reads MNIPPELTFEVLVRLPLKSLARFRSMCKEWKLVIDSEFFRDC.

This Arabidopsis thaliana (Mouse-ear cress) protein is Putative F-box protein At3g23950.